The sequence spans 104 residues: MDKADFLKGLPVYNKTNFSRFHADSVCKASNRRPSVYLPTREYPSEQIIVTEKTNILLRYLHQQWDKKNAAKKREQEQAEGEGGSPAPPRKIARTDSQEMNEDS.

The segment covering 67–77 has biased composition (basic and acidic residues); sequence KKNAAKKREQE. The interval 67–104 is disordered; that stretch reads KKNAAKKREQEQAEGEGGSPAPPRKIARTDSQEMNEDS.

Belongs to the DDA1 family. Component of numerous DCX (DDB1-CUL4-X-box) E3 ubiquitin-protein ligase complexes which consist of a core of DDB1, cullin-4 (CUL4A or CUL4B), DDA1 and RBX1.

Its pathway is protein modification; protein ubiquitination. Functionally, functions as a component of numerous distinct DCX (DDB1-CUL4-X-box) E3 ubiquitin-protein ligase complexes which mediate the ubiquitination and subsequent proteasomal degradation of target proteins. In the DCX complexes, acts as a scaffolding subunit required to stabilize the complex. This chain is DET1- and DDB1-associated protein 1, found in Danio rerio (Zebrafish).